The following is a 204-amino-acid chain: dITP/XTP pyrophosphatase (204 aa).

Position 8–13 (8–13 (TKNAGK)) interacts with substrate. Asp70 functions as the Proton acceptor in the catalytic mechanism. Asp70 contributes to the Mg(2+) binding site. Substrate-binding positions include Ser71, 153-156 (FGYD), Lys176, and 181-182 (HR).

This sequence belongs to the HAM1 NTPase family. Homodimer. Mg(2+) serves as cofactor.

It catalyses the reaction XTP + H2O = XMP + diphosphate + H(+). The catalysed reaction is dITP + H2O = dIMP + diphosphate + H(+). It carries out the reaction ITP + H2O = IMP + diphosphate + H(+). Pyrophosphatase that catalyzes the hydrolysis of nucleoside triphosphates to their monophosphate derivatives, with a high preference for the non-canonical purine nucleotides XTP (xanthosine triphosphate), dITP (deoxyinosine triphosphate) and ITP. Seems to function as a house-cleaning enzyme that removes non-canonical purine nucleotides from the nucleotide pool, thus preventing their incorporation into DNA/RNA and avoiding chromosomal lesions. In Geobacillus kaustophilus (strain HTA426), this protein is dITP/XTP pyrophosphatase.